Here is a 163-residue protein sequence, read N- to C-terminus: SsrA-binding protein (163 aa).

Belongs to the SmpB family.

The protein localises to the cytoplasm. Its function is as follows. Required for rescue of stalled ribosomes mediated by trans-translation. Binds to transfer-messenger RNA (tmRNA), required for stable association of tmRNA with ribosomes. tmRNA and SmpB together mimic tRNA shape, replacing the anticodon stem-loop with SmpB. tmRNA is encoded by the ssrA gene; the 2 termini fold to resemble tRNA(Ala) and it encodes a 'tag peptide', a short internal open reading frame. During trans-translation Ala-aminoacylated tmRNA acts like a tRNA, entering the A-site of stalled ribosomes, displacing the stalled mRNA. The ribosome then switches to translate the ORF on the tmRNA; the nascent peptide is terminated with the 'tag peptide' encoded by the tmRNA and targeted for degradation. The ribosome is freed to recommence translation, which seems to be the essential function of trans-translation. The sequence is that of SsrA-binding protein from Buchnera aphidicola subsp. Schizaphis graminum (strain Sg).